We begin with the raw amino-acid sequence, 149 residues long: Protein FAM72A (149 aa).

This sequence belongs to the FAM72 family. In terms of assembly, interacts with UNG. As to expression, may be up-regulated in malignant colon cancers, compared to normal colon and colon adenomas. Expression is also elevated in other common cancer types, including breast, lung, uterus, and ovary.

The protein resides in the cytoplasm. The protein localises to the mitochondrion. Its function is as follows. May play a role in the regulation of cellular reactive oxygen species metabolism. May participate in cell growth regulation. This Homo sapiens (Human) protein is Protein FAM72A (FAM72A).